An 89-amino-acid polypeptide reads, in one-letter code: Small ribosomal subunit protein uS15 (89 aa).

Belongs to the universal ribosomal protein uS15 family. In terms of assembly, part of the 30S ribosomal subunit. Forms a bridge to the 50S subunit in the 70S ribosome, contacting the 23S rRNA.

In terms of biological role, one of the primary rRNA binding proteins, it binds directly to 16S rRNA where it helps nucleate assembly of the platform of the 30S subunit by binding and bridging several RNA helices of the 16S rRNA. Its function is as follows. Forms an intersubunit bridge (bridge B4) with the 23S rRNA of the 50S subunit in the ribosome. In Rhizobium etli (strain CIAT 652), this protein is Small ribosomal subunit protein uS15.